A 185-amino-acid chain; its full sequence is Calcium-binding protein CML37 (185 aa).

Positions 1–12 are enriched in polar residues; the sequence is MTLAKNQKSSLS. Positions 1 to 45 are disordered; it reads MTLAKNQKSSLSRLYKKVSSKRSESSRNLEDESRTSSNSSGSSSL. The span at 21-34 shows a compositional bias: basic and acidic residues; that stretch reads KRSESSRNLEDESR. Positions 35-44 are enriched in low complexity; that stretch reads TSSNSSGSSS. 4 consecutive EF-hand domains span residues 45–80, 81–116, 119–154, and 155–185; these read LNVN…LGGA, LSSR…EDGS, ERRK…LGES, and CTVD…LMMR. Positions 58, 60, 62, 64, 69, 94, 96, 98, and 105 each coordinate Ca(2+). D168, N170, D172, and E179 together coordinate Ca(2+).

As to quaternary structure, binds to ABCG36. In terms of tissue distribution, expressed in cotyledons, stipule, young leaves and at the hypocotyl-root junction. In mature root, expressed in the stele, cortex, emerging lateral root, root tip and root cap. In mature plant, expressed at the base of cauline and floral branches, and in rosette and cauline leaves. Expressed from stage 9 to 14 of flower development in anthers. At stage 15, expressed in carpel, sepals, petals and pollen until dehiscence. Expressed in developing seeds and young siliques.

Functionally, potential calcium sensor that binds calcium in vitro. The protein is Calcium-binding protein CML37 of Arabidopsis thaliana (Mouse-ear cress).